The sequence spans 227 residues: Germin-like protein subfamily 1 member 3 (227 aa).

Residues 1 to 24 (MKYPFQCFLAKIILLALASSFVSC) form the signal peptide. C34 and C50 are joined by a disulfide. The Cupin type-1 domain maps to 64 to 212 (SGLNIPGNTN…AFALDINIVR (149 aa)). Mn(2+) is bound by residues H109, H111, and E116. N136 is a glycosylation site (N-linked (GlcNAc...) asparagine). H160 serves as a coordination point for Mn(2+).

Belongs to the germin family. As to quaternary structure, oligomer (believed to be a pentamer but probably hexamer).

The protein localises to the secreted. It is found in the extracellular space. It localises to the apoplast. Functionally, may play a role in plant defense. Probably has no oxalate oxidase activity even if the active site is conserved. This is Germin-like protein subfamily 1 member 3 from Arabidopsis thaliana (Mouse-ear cress).